Reading from the N-terminus, the 631-residue chain is Clathrin interactor 1 (631 aa).

An ENTH domain is found at asparagine 24 to arginine 157. Arginine 37 contacts a 1,2-diacyl-sn-glycero-3-phospho-(1D-myo-inositol-4,5-bisphosphate). The interaction with VTI1B stretch occupies residues phenylalanine 60–tyrosine 62. Arginine 75 contacts a 1,2-diacyl-sn-glycero-3-phospho-(1D-myo-inositol-4,5-bisphosphate). Interaction with VTI1B regions lie at residues serine 102 to arginine 104 and aspartate 150 to lysine 161. Serine 171, serine 174, serine 213, serine 218, serine 235, serine 253, and serine 307 each carry phosphoserine. A disordered region spans residues phenylalanine 227–aspartate 339. Positions lysine 230–lysine 247 are enriched in basic and acidic residues. Residues proline 308–glutamine 318 are compositionally biased toward polar residues. Residue threonine 316 is modified to Phosphothreonine. A compositionally biased stretch (low complexity) spans serine 319–serine 331. 2 positions are modified to phosphoserine: serine 320 and serine 630.

The protein belongs to the epsin family. In terms of assembly, binds clathrin heavy chain and AP-2. Interacts with VTI1B. Interacts with GGA2 (via GAE domain). Interacts with AP1G1 (via GAE domain). Interacts with AP1G2 (via GAE domain).

It is found in the cytoplasm. It localises to the perinuclear region. Its subcellular location is the membrane. The protein resides in the cytoplasmic vesicle. The protein localises to the clathrin-coated vesicle. Its function is as follows. Binds to membranes enriched in phosphatidylinositol 4,5-bisphosphate (PtdIns(4,5)P2). May have a role in transport via clathrin-coated vesicles from the trans-Golgi network to endosomes. Stimulates clathrin assembly. The chain is Clathrin interactor 1 (Clint1) from Mus musculus (Mouse).